A 117-amino-acid polypeptide reads, in one-letter code: Transcription elongation factor SPT4-B (117 aa).

An interaction with SUPT5H region spans residues 1–40; the sequence is MALETVPKDLRHLRACLLCSLVKTIDQFEYDGCDNCDAYL. The segment at 16 to 36 adopts a C4-type zinc-finger fold; sequence CLLCSLVKTIDQFEYDGCDNC.

This sequence belongs to the SPT4 family. As to quaternary structure, interacts with SUPT5H to form DSIF. DSIF interacts with the positive transcription elongation factor b complex (P-TEFb complex), which is composed of CDK9 and cyclin-T (CCNT1 or CCNT2). DSIF interacts with RNA polymerase II, and this interaction is reduced by phosphorylation of the C-terminal domain (CTD) of POLR2A by P-TEFb. DSIF also interacts with the NELF complex, which is composed of WHSC2/NELFA, COBRA1/NELFB, TH1L/NELFD and RDBP/NELFE, and this interaction occurs following prior binding of DSIF to RNA polymerase II. DSIF also interacts with HRMT1L2/PRMT1, HTATSF1/TATSF1, RNGTT/CAP1A, SKB1/PRMT5, SUPT6H, and can interact with PIN1. Post-translationally, ubiquitinated by Ubr5 when not assembled in the DSIF complex, leading to its degradation: Ubr5 recognizes and binds a degron that is not accessible when Supt4h1b is part of the DSIF complex. In terms of tissue distribution, expressed in brain, heart and liver.

Its subcellular location is the nucleus. Its function is as follows. Component of the DRB sensitivity-inducing factor complex (DSIF complex), which regulates mRNA processing and transcription elongation by RNA polymerase II. DSIF positively regulates mRNA capping by stimulating the mRNA guanylyltransferase activity of RNGTT/CAP1A. DSIF also acts cooperatively with the negative elongation factor complex (NELF complex) to enhance transcriptional pausing at sites proximal to the promoter. Transcriptional pausing may facilitate the assembly of an elongation competent RNA polymerase II complex. DSIF and NELF promote pausing by inhibition of the transcription elongation factor TFIIS/S-II. TFIIS/S-II binds to RNA polymerase II at transcription pause sites and stimulates the weak intrinsic nuclease activity of the enzyme. Cleavage of blocked transcripts by RNA polymerase II promotes the resumption of transcription from the new 3' terminus and may allow repeated attempts at transcription through natural pause sites. The sequence is that of Transcription elongation factor SPT4-B (Supt4h1b) from Mus musculus (Mouse).